A 493-amino-acid chain; its full sequence is Tripartite motif-containing protein 5 (493 aa).

Ala-2 carries the post-translational modification N-acetylalanine. The RING-type zinc-finger motif lies at 15–59 (CPICLELLTQPLSLDCGHSFCQACLTANHKKSMLDKGESSCPVCR). The residue at position 86 (Ser-86) is a Phosphoserine. The B box-type zinc-finger motif lies at 90 to 132 (QKVDHCAHHGEKLLLFCQEDGKVICWLCERSQEHRGHHTFLTE). Residues Cys-95, His-98, Cys-117, and His-123 each coordinate Zn(2+). The stretch at 131-240 (TEEVAREYQV…LISDLERRLQ (110 aa)) forms a coiled coil. A required for interaction with GABARAP and for autophagy region spans residues 185-198 (FEQLRDILDWEESN). In terms of domain architecture, B30.2/SPRY spans 281–493 (LKGMLEVFRE…VPMTLCSPSS (213 aa)).

Belongs to the TRIM/RBCC family. As to quaternary structure, can form homodimers and homotrimers. In addition to lower-order dimerization, also exhibits a higher-order multimerization and both low- and high-order multimerizations are essential for its restriction activity. Interacts with BTBD1 and BTBD2. Interacts with PSMC4, PSMC5, PSMD7 and HSPA8/HSC70. Interacts (via B30.2/SPRY domain) with HSPA1A/B. Interacts with PSMC2, MAP3K7/TAK1, TAB2 and TAB3. Interacts with SQSTM1. Interacts with TRIM6 and TRIM34. Interacts with ULK1 (phosphorylated form), GABARAP, GABARAPL1, GABARAPL2, MAP1LC3A, MAP1LC3C and BECN1. Post-translationally, degraded in a proteasome-independent fashion in the absence of viral infection but in a proteasome-dependent fashion following exposure to restriction sensitive virus. In terms of processing, autoubiquitinated in a RING finger- and UBE2D2-dependent manner. Monoubiquitinated by TRIM21. Deubiquitinated by Yersinia YopJ. Ubiquitination may not lead to proteasomal degradation.

Its subcellular location is the cytoplasm. The protein resides in the nucleus. The catalysed reaction is S-ubiquitinyl-[E2 ubiquitin-conjugating enzyme]-L-cysteine + [acceptor protein]-L-lysine = [E2 ubiquitin-conjugating enzyme]-L-cysteine + N(6)-ubiquitinyl-[acceptor protein]-L-lysine.. It participates in protein modification; protein ubiquitination. In terms of biological role, capsid-specific restriction factor that prevents infection from non-host-adapted retroviruses. Blocks viral replication early in the life cycle, after viral entry but before reverse transcription. In addition to acting as a capsid-specific restriction factor, also acts as a pattern recognition receptor that activates innate immune signaling in response to the retroviral capsid lattice. Binding to the viral capsid triggers its E3 ubiquitin ligase activity, and in concert with the heterodimeric ubiquitin conjugating enzyme complex UBE2V1-UBE2N (also known as UBC13-UEV1A complex) generates 'Lys-63'-linked polyubiquitin chains, which in turn are catalysts in the autophosphorylation of the MAP3K7/TAK1 complex (includes TAK1, TAB2, and TAB3). Activation of the MAP3K7/TAK1 complex by autophosphorylation results in the induction and expression of NF-kappa-B and MAPK-responsive inflammatory genes, thereby leading to an innate immune response in the infected cell. Plays a role in regulating autophagy through activation of autophagy regulator BECN1 by causing its dissociation from its inhibitors BCL2 and TAB2. This Pan troglodytes (Chimpanzee) protein is Tripartite motif-containing protein 5 (TRIM5).